Reading from the N-terminus, the 439-residue chain is Ornithine aminotransferase, mitochondrial (439 aa).

A mitochondrion-targeting transit peptide spans 1-35; it reads MLSKLASLQTVAALRRGLRTSVASATSVATKKTEQ. N6-acetyllysine is present on residues K49 and K66. K102 is subject to N6-succinyllysine. The residue at position 107 (K107) is an N6-acetyllysine; alternate. K107 carries the post-translational modification N6-succinyllysine; alternate. Position 292 is an N6-(pyridoxal phosphate)lysine (K292). K362 bears the N6-acetyllysine; alternate mark. The residue at position 362 (K362) is an N6-succinyllysine; alternate. 2 positions are modified to N6-acetyllysine: K386 and K392. N6-acetyllysine; alternate is present on K405. N6-succinyllysine; alternate is present on K405. K421 carries the post-translational modification N6-acetyllysine.

As to quaternary structure, homohexamer. It depends on pyridoxal 5'-phosphate as a cofactor. As to expression, expressed in the head and flagellum of epididymal sperm but not in testicular sperm (at protein level).

It localises to the mitochondrion matrix. It catalyses the reaction L-ornithine + 2-oxoglutarate = L-glutamate 5-semialdehyde + L-glutamate. It participates in amino-acid biosynthesis; L-proline biosynthesis; L-glutamate 5-semialdehyde from L-ornithine: step 1/1. Its function is as follows. Catalyzes the reversible interconversion of L-ornithine and 2-oxoglutarate to L-glutamate semialdehyde and L-glutamate. This is Ornithine aminotransferase, mitochondrial (Oat) from Rattus norvegicus (Rat).